A 62-amino-acid polypeptide reads, in one-letter code: Large ribosomal subunit protein eL37 (62 aa).

Cysteine 20, cysteine 23, cysteine 35, and cysteine 38 together coordinate Zn(2+). The segment at 20–38 adopts a C4-type zinc-finger fold; that stretch reads CRRCGRHAFNVAKGYCAAC.

The protein belongs to the eukaryotic ribosomal protein eL37 family. The cofactor is Zn(2+).

Its function is as follows. Binds to the 23S rRNA. This is Large ribosomal subunit protein eL37 from Staphylothermus marinus (strain ATCC 43588 / DSM 3639 / JCM 9404 / F1).